Consider the following 414-residue polypeptide: MLEEGEHVLVAVSGGIDSMTLLYVLRKFSPLLKIKITAAHLDHRIRESSRRDREFVERICRQWNIPVETSEVDVPSLWKDSGKTLEEIAREVRYDFLKRTAKKVGASKIALAHHKNDLLETVVHRLIRGTGPLGLACISPKREEFIRPFLVFKRSEIEEYARKNNVPYVVDETNYNVKYTRNFIRHRIVPLMKELNPTVEDAVYRLVSVTHLLRNFVERTVQDFVERNVYFYKDYAVFVEPEDLFLFLEVTRWVLKEMYGRVPEYEKLIGTLKSKRVELWSGIFVERSFGYVAVGKTVFKKKYRVEVKGDMLEMEGFKIRVVNNRNDMKFWVRNRKEGDRIIVNGRERKLKDVFIEKKVPTFYRDRVPLLVDEEDRVLWVPGIARSDFLPEDVVVELLEYPVGYVKGGTYFEQV.

Position 13 to 18 (13 to 18 (SGGIDS)) interacts with ATP.

The protein belongs to the tRNA(Ile)-lysidine synthase family.

It localises to the cytoplasm. It catalyses the reaction cytidine(34) in tRNA(Ile2) + L-lysine + ATP = lysidine(34) in tRNA(Ile2) + AMP + diphosphate + H(+). Its function is as follows. Ligates lysine onto the cytidine present at position 34 of the AUA codon-specific tRNA(Ile) that contains the anticodon CAU, in an ATP-dependent manner. Cytidine is converted to lysidine, thus changing the amino acid specificity of the tRNA from methionine to isoleucine. In Thermotoga maritima (strain ATCC 43589 / DSM 3109 / JCM 10099 / NBRC 100826 / MSB8), this protein is tRNA(Ile)-lysidine synthase.